The sequence spans 177 residues: ATP-dependent protease subunit HslV (177 aa).

Threonine 4 is a catalytic residue. Residues serine 159, cysteine 162, and threonine 165 each coordinate Na(+).

Belongs to the peptidase T1B family. HslV subfamily. As to quaternary structure, a double ring-shaped homohexamer of HslV is capped on each side by a ring-shaped HslU homohexamer. The assembly of the HslU/HslV complex is dependent on binding of ATP.

Its subcellular location is the cytoplasm. It catalyses the reaction ATP-dependent cleavage of peptide bonds with broad specificity.. Allosterically activated by HslU binding. Its function is as follows. Protease subunit of a proteasome-like degradation complex believed to be a general protein degrading machinery. This Mesorhizobium japonicum (strain LMG 29417 / CECT 9101 / MAFF 303099) (Mesorhizobium loti (strain MAFF 303099)) protein is ATP-dependent protease subunit HslV.